The chain runs to 127 residues: Large ribosomal subunit protein bL21 (127 aa).

This sequence belongs to the bacterial ribosomal protein bL21 family. As to quaternary structure, part of the 50S ribosomal subunit. Contacts protein L20.

Functionally, this protein binds to 23S rRNA in the presence of protein L20. This chain is Large ribosomal subunit protein bL21, found in Blochmanniella floridana.